Reading from the N-terminus, the 221-residue chain is Cytidylate kinase (221 aa).

11 to 19 contacts ATP; the sequence is GPTASGKGT.

This sequence belongs to the cytidylate kinase family. Type 1 subfamily.

It is found in the cytoplasm. It carries out the reaction CMP + ATP = CDP + ADP. The catalysed reaction is dCMP + ATP = dCDP + ADP. The protein is Cytidylate kinase of Cupriavidus pinatubonensis (strain JMP 134 / LMG 1197) (Cupriavidus necator (strain JMP 134)).